The sequence spans 152 residues: Protein-export protein SecB (152 aa).

The protein belongs to the SecB family. Homotetramer, a dimer of dimers. One homotetramer interacts with 1 SecA dimer.

The protein resides in the cytoplasm. Functionally, one of the proteins required for the normal export of preproteins out of the cell cytoplasm. It is a molecular chaperone that binds to a subset of precursor proteins, maintaining them in a translocation-competent state. It also specifically binds to its receptor SecA. This chain is Protein-export protein SecB, found in Rickettsia peacockii (strain Rustic).